We begin with the raw amino-acid sequence, 226 residues long: ATP synthase F(0) complex subunit a (226 aa).

A run of 6 helical transmembrane segments spans residues 12–32 (PTMM…ILFP), 68–88 (WTLM…LGLL), 97–117 (QLSM…VTGF), 138–158 (IPML…ALAV), 164–184 (ITAG…LMSI), and 189–209 (ASIT…VALI).

Belongs to the ATPase A chain family. In terms of assembly, component of the ATP synthase complex composed at least of ATP5F1A/subunit alpha, ATP5F1B/subunit beta, ATP5MC1/subunit c (homooctomer), MT-ATP6/subunit a, MT-ATP8/subunit 8, ATP5ME/subunit e, ATP5MF/subunit f, ATP5MG/subunit g, ATP5MK/subunit k, ATP5MJ/subunit j, ATP5F1C/subunit gamma, ATP5F1D/subunit delta, ATP5F1E/subunit epsilon, ATP5PF/subunit F6, ATP5PB/subunit b, ATP5PD/subunit d, ATP5PO/subunit OSCP. ATP synthase complex consists of a soluble F(1) head domain (subunits alpha(3) and beta(3)) - the catalytic core - and a membrane F(0) domain - the membrane proton channel (subunits c, a, 8, e, f, g, k and j). These two domains are linked by a central stalk (subunits gamma, delta, and epsilon) rotating inside the F1 region and a stationary peripheral stalk (subunits F6, b, d, and OSCP). Interacts with DNAJC30; interaction is direct.

The protein localises to the mitochondrion inner membrane. The enzyme catalyses H(+)(in) = H(+)(out). Subunit a, of the mitochondrial membrane ATP synthase complex (F(1)F(0) ATP synthase or Complex V) that produces ATP from ADP in the presence of a proton gradient across the membrane which is generated by electron transport complexes of the respiratory chain. ATP synthase complex consist of a soluble F(1) head domain - the catalytic core - and a membrane F(1) domain - the membrane proton channel. These two domains are linked by a central stalk rotating inside the F(1) region and a stationary peripheral stalk. During catalysis, ATP synthesis in the catalytic domain of F(1) is coupled via a rotary mechanism of the central stalk subunits to proton translocation. With the subunit c (ATP5MC1), forms the proton-conducting channel in the F(0) domain, that contains two crucial half-channels (inlet and outlet) that facilitate proton movement from the mitochondrial intermembrane space (IMS) into the matrix. Protons are taken up via the inlet half-channel and released through the outlet half-channel, following a Grotthuss mechanism. This is ATP synthase F(0) complex subunit a from Dasypus novemcinctus (Nine-banded armadillo).